The sequence spans 201 residues: Holliday junction branch migration complex subunit RuvA (201 aa).

A domain I region spans residues 1-63; it reads MISHFSGTVS…EESLTLYGFV (63 aa). The segment at 64–142 is domain II; sequence EADDRDAFEL…ALAPRGASAS (79 aa). A flexible linker region spans residues 143-153; sequence GATHVAAPWRE. The interval 153–201 is domain III; the sequence is EQVAEGLVGLGWSTKDAEKAVDKVVALKEADPAMSIGNLMRAALRSLAR.

This sequence belongs to the RuvA family. Homotetramer. Forms an RuvA(8)-RuvB(12)-Holliday junction (HJ) complex. HJ DNA is sandwiched between 2 RuvA tetramers; dsDNA enters through RuvA and exits via RuvB. An RuvB hexamer assembles on each DNA strand where it exits the tetramer. Each RuvB hexamer is contacted by two RuvA subunits (via domain III) on 2 adjacent RuvB subunits; this complex drives branch migration. In the full resolvosome a probable DNA-RuvA(4)-RuvB(12)-RuvC(2) complex forms which resolves the HJ.

Its subcellular location is the cytoplasm. The RuvA-RuvB-RuvC complex processes Holliday junction (HJ) DNA during genetic recombination and DNA repair, while the RuvA-RuvB complex plays an important role in the rescue of blocked DNA replication forks via replication fork reversal (RFR). RuvA specifically binds to HJ cruciform DNA, conferring on it an open structure. The RuvB hexamer acts as an ATP-dependent pump, pulling dsDNA into and through the RuvAB complex. HJ branch migration allows RuvC to scan DNA until it finds its consensus sequence, where it cleaves and resolves the cruciform DNA. The chain is Holliday junction branch migration complex subunit RuvA from Cutibacterium acnes (strain DSM 16379 / KPA171202) (Propionibacterium acnes).